The sequence spans 397 residues: Elongation factor Tu (397 aa).

The tr-type G domain occupies 10–207 (KPHVNIGTIG…ACDSYIPEPE (198 aa)). The interval 19–26 (GHIDHGKT) is G1. 19-26 (GHIDHGKT) is a GTP binding site. A Mg(2+)-binding site is contributed by threonine 26. Residues 60-64 (GITIA) are G2. Residues 81 to 84 (DCPG) are G3. GTP-binding positions include 81–85 (DCPGH) and 136–139 (NKCD). The segment at 136-139 (NKCD) is G4. Residues 174–176 (SAL) are G5.

The protein belongs to the TRAFAC class translation factor GTPase superfamily. Classic translation factor GTPase family. EF-Tu/EF-1A subfamily. In terms of assembly, monomer.

It localises to the cytoplasm. The catalysed reaction is GTP + H2O = GDP + phosphate + H(+). Its function is as follows. GTP hydrolase that promotes the GTP-dependent binding of aminoacyl-tRNA to the A-site of ribosomes during protein biosynthesis. The chain is Elongation factor Tu from Oleidesulfovibrio alaskensis (strain ATCC BAA-1058 / DSM 17464 / G20) (Desulfovibrio alaskensis).